The following is a 611-amino-acid chain: L-tyrosine decarboxylase (611 aa).

Pyridoxal 5'-phosphate contacts are provided by residues 151–152 (GS), Thr-292, and 382–384 (DPH). Lys-385 carries the N6-(pyridoxal phosphate)lysine modification. Tyr-413 serves as the catalytic Proton donor. Pyridoxal 5'-phosphate is bound at residue Ser-433.

Belongs to the group II decarboxylase family. Tyrosine decarboxylase subfamily. In terms of assembly, homodimer. Requires pyridoxal 5'-phosphate as cofactor.

It catalyses the reaction L-tyrosine + H(+) = tyramine + CO2. The enzyme catalyses L-dopa + H(+) = dopamine + CO2. It functions in the pathway amino-acid metabolism. Levodopa decarboxylation is not inhibited by carbidopa, benserazide, and methyldopa, that are three human L-dopa decarboxylase inhibitors. Its function is as follows. Catalyzes the decarboxylation of L-tyrosine to produce tyramine. Plays a role in acid resistance since tyramine production via tyrosine decarboxylation appears to provide a cytosolic pH maintenance mechanism that helps the bacterium cope with acid stress such as that encountered in gastrointestinal tract (GIT) environments. Therefore, may contribute to the colonization of the human GIT by E.faecium. Also involved in drug metabolism, being able to catalyze decarboxylation of levodopa (L-dopa) to dopamine. In gut microbiota this enzyme is in fact exclusively responsible for the decarboxylation of levodopa, and thus reduces in situ levels of levodopa in the treatment of Parkinson's disease. It was shown that abundance of bacterial tyrosine decarboxylase in the proximal small intestine - the primary site of levodopa absorption - contributes to interindividual variation in drug efficacy and can explain the requirement for an increased dosage regimen of levodopa treatment in Parkinson's disease patients. The protein is L-tyrosine decarboxylase of Enterococcus faecium (Streptococcus faecium).